The primary structure comprises 70 residues: Large ribosomal subunit protein bL31 (70 aa).

Residues Cys16, Cys18, Cys37, and Cys40 each contribute to the Zn(2+) site.

This sequence belongs to the bacterial ribosomal protein bL31 family. Type A subfamily. Part of the 50S ribosomal subunit. Requires Zn(2+) as cofactor.

Binds the 23S rRNA. This is Large ribosomal subunit protein bL31 from Cronobacter sakazakii (strain ATCC BAA-894) (Enterobacter sakazakii).